Consider the following 396-residue polypeptide: Queuine tRNA-ribosyltransferase catalytic subunit 1 (396 aa).

The Proton acceptor role is filled by Asp-99. Queuine is bound by residues 99–103, Asp-153, Gln-196, and Gly-223; that span reads DSGGF. Positions 254-260 are RNA binding; it reads GVGYATD. The Nucleophile role is filled by Asp-273. The RNA binding; important for wobble base 34 recognition stretch occupies residues 278–282; that stretch reads TRTAR. Zn(2+) contacts are provided by Cys-311, Cys-313, Cys-316, and His-341.

The protein belongs to the queuine tRNA-ribosyltransferase family. As to quaternary structure, heterodimer of a catalytic subunit qtrt1 and an accessory subunit qtrt2. It depends on Zn(2+) as a cofactor.

The protein localises to the cytoplasm. The protein resides in the mitochondrion outer membrane. The catalysed reaction is guanosine(34) in tRNA + queuine = queuosine(34) in tRNA + guanine. In terms of biological role, catalytic subunit of the queuine tRNA-ribosyltransferase (TGT) that catalyzes the base-exchange of a guanine (G) residue with queuine (Q) at position 34 (anticodon wobble position) in tRNAs with GU(N) anticodons (tRNA-Asp, -Asn, -His and -Tyr), resulting in the hypermodified nucleoside queuosine (7-(((4,5-cis-dihydroxy-2-cyclopenten-1-yl)amino)methyl)-7-deazaguanosine). Catalysis occurs through a double-displacement mechanism. The nucleophile active site attacks the C1' of nucleotide 34 to detach the guanine base from the RNA, forming a covalent enzyme-RNA intermediate. The proton acceptor active site deprotonates the incoming queuine, allowing a nucleophilic attack on the C1' of the ribose to form the product. In Xenopus laevis (African clawed frog), this protein is Queuine tRNA-ribosyltransferase catalytic subunit 1.